An 87-amino-acid polypeptide reads, in one-letter code: Sec-independent protein translocase protein TatA (87 aa).

A helical transmembrane segment spans residues 1-21 (MGGISIWQLLIIALIIVLLFG). The disordered stretch occupies residues 54–87 (NTEADADFEQKTLSKEEQQSEDPVQKSQKDKEQV).

The protein belongs to the TatA/E family. In terms of assembly, the Tat system comprises two distinct complexes: a TatABC complex, containing multiple copies of TatA, TatB and TatC subunits, and a separate TatA complex, containing only TatA subunits. Substrates initially bind to the TatABC complex, which probably triggers association of the separate TatA complex to form the active translocon.

It localises to the cell inner membrane. Part of the twin-arginine translocation (Tat) system that transports large folded proteins containing a characteristic twin-arginine motif in their signal peptide across membranes. TatA could form the protein-conducting channel of the Tat system. The sequence is that of Sec-independent protein translocase protein TatA from Photobacterium profundum (strain SS9).